Here is a 234-residue protein sequence, read N- to C-terminus: Probable plastid-lipid-associated protein 5, chloroplastic (234 aa).

A chloroplast-targeting transit peptide spans 1–45 (MALPWCLKTGVLTSPAAGFNHPSDSGFAVPTKLLSIRKGDRERLR).

The protein belongs to the PAP/fibrillin family.

It is found in the plastid. The protein localises to the chloroplast thylakoid. The sequence is that of Probable plastid-lipid-associated protein 5, chloroplastic (PAP5) from Arabidopsis thaliana (Mouse-ear cress).